A 94-amino-acid chain; its full sequence is Integration host factor subunit beta (94 aa).

The protein belongs to the bacterial histone-like protein family. In terms of assembly, heterodimer of an alpha and a beta chain.

Functionally, this protein is one of the two subunits of integration host factor, a specific DNA-binding protein that functions in genetic recombination as well as in transcriptional and translational control. In Vibrio atlanticus (strain LGP32) (Vibrio splendidus (strain Mel32)), this protein is Integration host factor subunit beta.